The chain runs to 367 residues: UDP-N-acetylglucosamine--N-acetylmuramyl-(pentapeptide) pyrophosphoryl-undecaprenol N-acetylglucosamine transferase (367 aa).

UDP-N-acetyl-alpha-D-glucosamine-binding positions include 13–15 (TGG), Asn-127, Arg-168, Ser-200, Ile-251, and Gln-296.

The protein belongs to the glycosyltransferase 28 family. MurG subfamily.

The protein resides in the cell inner membrane. The enzyme catalyses di-trans,octa-cis-undecaprenyl diphospho-N-acetyl-alpha-D-muramoyl-L-alanyl-D-glutamyl-meso-2,6-diaminopimeloyl-D-alanyl-D-alanine + UDP-N-acetyl-alpha-D-glucosamine = di-trans,octa-cis-undecaprenyl diphospho-[N-acetyl-alpha-D-glucosaminyl-(1-&gt;4)]-N-acetyl-alpha-D-muramoyl-L-alanyl-D-glutamyl-meso-2,6-diaminopimeloyl-D-alanyl-D-alanine + UDP + H(+). Its pathway is cell wall biogenesis; peptidoglycan biosynthesis. Cell wall formation. Catalyzes the transfer of a GlcNAc subunit on undecaprenyl-pyrophosphoryl-MurNAc-pentapeptide (lipid intermediate I) to form undecaprenyl-pyrophosphoryl-MurNAc-(pentapeptide)GlcNAc (lipid intermediate II). The protein is UDP-N-acetylglucosamine--N-acetylmuramyl-(pentapeptide) pyrophosphoryl-undecaprenol N-acetylglucosamine transferase of Flavobacterium psychrophilum (strain ATCC 49511 / DSM 21280 / CIP 103535 / JIP02/86).